The chain runs to 276 residues: MDWILICKALALGIVEGLTEFLPVSSTGHLIVAGSFLRFHPEQAKTFDVVIQFGAILAVCWEYRRRIIDVVTGLPAQREARRFTMNVVIATVPAVALALLFEKTIKSVLFAPVPVAVALVVGGAAILWVEGRQRERSEPARVQSIDALTPFDALKVGLAQCCALIPGMSRSGSTIIGGMLFGLERRVATEFSFFLAIPVIFGATLYETAKDWRAFNVDSVGLFAIGLVAAFVSAFACVRWLLRYVASHDFTAFAWYRIAFGLFVLLVGYSGWIEWT.

5 helical membrane passes run 85–105 (MNVV…EKTI), 108–128 (VLFA…AILW), 187–207 (VATE…TLYE), 217–237 (VDSV…AFAC), and 253–273 (FAWY…SGWI).

It belongs to the UppP family.

The protein resides in the cell inner membrane. It catalyses the reaction di-trans,octa-cis-undecaprenyl diphosphate + H2O = di-trans,octa-cis-undecaprenyl phosphate + phosphate + H(+). Its function is as follows. Catalyzes the dephosphorylation of undecaprenyl diphosphate (UPP). Confers resistance to bacitracin. The chain is Undecaprenyl-diphosphatase from Burkholderia mallei (strain NCTC 10247).